A 179-amino-acid polypeptide reads, in one-letter code: Large ribosomal subunit protein uL6 (179 aa).

It belongs to the universal ribosomal protein uL6 family. In terms of assembly, part of the 50S ribosomal subunit.

Functionally, this protein binds to the 23S rRNA, and is important in its secondary structure. It is located near the subunit interface in the base of the L7/L12 stalk, and near the tRNA binding site of the peptidyltransferase center. This chain is Large ribosomal subunit protein uL6, found in Chlorobium luteolum (strain DSM 273 / BCRC 81028 / 2530) (Pelodictyon luteolum).